The sequence spans 482 residues: ATP synthase subunit beta (482 aa).

An ATP-binding site is contributed by 168 to 175; the sequence is GGAGVGKT.

This sequence belongs to the ATPase alpha/beta chains family. F-type ATPases have 2 components, CF(1) - the catalytic core - and CF(0) - the membrane proton channel. CF(1) has five subunits: alpha(3), beta(3), gamma(1), delta(1), epsilon(1). CF(0) has three main subunits: a(1), b(2) and c(9-12). The alpha and beta chains form an alternating ring which encloses part of the gamma chain. CF(1) is attached to CF(0) by a central stalk formed by the gamma and epsilon chains, while a peripheral stalk is formed by the delta and b chains.

It is found in the cell membrane. It carries out the reaction ATP + H2O + 4 H(+)(in) = ADP + phosphate + 5 H(+)(out). Functionally, produces ATP from ADP in the presence of a proton gradient across the membrane. The catalytic sites are hosted primarily by the beta subunits. This is ATP synthase subunit beta from Nocardia farcinica (strain IFM 10152).